The sequence spans 320 residues: Protein MRG1 (320 aa).

The segment at 1–28 (MGSSSKEETASDGDTASGGASPSNDGRL) is disordered. A compositionally biased stretch (polar residues) spans 12-24 (DGDTASGGASPSN). A Tudor-knot domain is found at 30-80 (SEGERVLAYHGPRVYGAKVQKVELRKKEWKYFVHYLGWNKNWDEWVSADRL). Positions 93–104 (ALDKKQGVEKGT) are enriched in basic and acidic residues. The segment at 93–147 (ALDKKQGVEKGTKSGRSAQTKTRSSADTKADKDDTKTNAAKGKKRKHESGNEKDN) is disordered. The segment covering 106 to 115 (SGRSAQTKTR) has biased composition (polar residues). Residues 116–128 (SSADTKADKDDTK) are compositionally biased toward basic and acidic residues. The 169-residue stretch at 150-318 (AEKLMKIQIP…KVSDGKGKGK (169 aa)) folds into the MRG domain.

In terms of assembly, interacts with HAM1 and HAM2. Interacts (via MRG domain) with CO. Component of the NuA4 histone acetyltransferase complex. In terms of tissue distribution, ubiquitous. Mainly expressed in the vasculature of cotyledons and leaves, and in roots and inflorescences.

The protein resides in the nucleus. Chromatin remodeling factor. Acts as a 'reader' protein by binding to H3K36me3 and H3K36me3 to control histone H4 acetylation. Increases the transcriptional levels of the flowering time genes FLC and FT. Binds the chromatin at the FT promoter upon interaction with CO. The polypeptide is Protein MRG1 (Arabidopsis thaliana (Mouse-ear cress)).